The following is a 300-amino-acid chain: Type II methyltransferase M.Cfr9I (300 aa).

Positions 109 to 129 (RGYRAPDKKNPARAMAVRPDT) are disordered.

This sequence belongs to the N(4)/N(6)-methyltransferase family. N(4) subfamily.

It carries out the reaction a 2'-deoxycytidine in DNA + S-adenosyl-L-methionine = an N(4)-methyl-2'-deoxycytidine in DNA + S-adenosyl-L-homocysteine + H(+). In terms of biological role, a beta subtype methylase, recognizes the double-stranded sequence 5'-CCCGGG-3', methylates C-2 on both strands, and protects the DNA from cleavage by the Cfr9I endonuclease. The chain is Type II methyltransferase M.Cfr9I from Citrobacter freundii.